The following is a 557-amino-acid chain: Ubiquitin C-terminal hydrolase 22 (557 aa).

Residues 36-130 (FRCFNDARIK…VSKQLFGLGM (95 aa)) form a UBP-type; degenerate zinc finger. 8 residues coordinate Zn(2+): C56, C59, C69, C72, C77, H80, H84, and H91. One can recognise a USP domain in the interval 177 to 531 (RGLNNLGSTC…ECYMLFYAQE (355 aa)). C186 acts as the Nucleophile in catalysis. H491 acts as the Proton acceptor in catalysis.

The protein belongs to the peptidase C19 family. As to quaternary structure, component of a deubiquitination module (DUB module) formed by ENY2, SGF11, and UBP22 in Arabidopsis. Interacts directly with SGF11, but not with ENY2.

It is found in the nucleus. The protein localises to the nucleoplasm. The enzyme catalyses Thiol-dependent hydrolysis of ester, thioester, amide, peptide and isopeptide bonds formed by the C-terminal Gly of ubiquitin (a 76-residue protein attached to proteins as an intracellular targeting signal).. Component of a deubiquitination module (DUB module) that specifically deubiquinates monoubiquinated histone H2B (H2Bub). Does not seem to be a component of the TREX-2 complex. Seems to act independently of the SAGA multiprotein complex. The DUB module is responsible for the major H2Bub deubiquitinase activity in Arabidopsis. This chain is Ubiquitin C-terminal hydrolase 22, found in Arabidopsis thaliana (Mouse-ear cress).